Consider the following 501-residue polypeptide: Dye-decolorizing peroxidase (501 aa).

The N-terminal stretch at 1–21 (MRLSPSFLSLALVIFVGEVVA) is a signal peptide. Positions 22 to 60 (RNVVARASNPASVTGTRKVSLLKNVAGLPAVPTAQQVAV) are excised as a propeptide. The Proton acceptor role is filled by aspartate 228. The N-linked (GlcNAc...) asparagine glycan is linked to asparagine 352. Histidine 367 is a heme binding site. N-linked (GlcNAc...) asparagine glycosylation is present at asparagine 403.

Belongs to the DyP-type peroxidase family. The cofactor is heme b.

The protein resides in the secreted. The catalysed reaction is Reactive Blue 5 + 2 H2O2 = 2,2'-disulfonyl azobenzene + 3-[(4-amino-6-chloro-1,3,5-triazin-2-yl)amino]benzenesulfonate + phthalate + 2 H2O + 2 H(+). The enzyme catalyses 2 a phenolic donor + H2O2 = 2 a phenolic radical donor + 2 H2O. Manganese-independent peroxidase that is able to convert a large number of compounds, but its physiological substrate is not known. In addition to classic peroxidase substrates (e.g. 2,6-dimethoxyphenol), oxidizes dyes such as Reactive Blue 5 and Reactive Black 5. The polypeptide is Dye-decolorizing peroxidase (Exidia glandulosa (Black witch's butter)).